Consider the following 826-residue polypeptide: G-protein coupled receptor-associated sorting protein 2 (826 aa).

4 disordered regions span residues 1–126, 204–286, 336–371, and 506–534; these read MTGA…AQAW, WCYP…NPFC, EGNR…QESR, and IPEG…DSVA. The segment covering 13–31 has biased composition (basic and acidic residues); that stretch reads KPDKKPQEEVAGGAERESE. Residues 59-73 show a composition bias toward polar residues; the sequence is SSRARPKTETQSVSG. The segment covering 231-247 has biased composition (basic and acidic residues); that stretch reads TREETSIRSWPREEVNT. Residues 248 to 264 show a composition bias toward basic residues; sequence RSRHRAKHQTNARSKPR. S275 and S277 each carry phosphoserine.

This sequence belongs to the GPRASP family. As to quaternary structure, interacts with cytoplasmic tails of a variety of G-protein coupled receptors such as muscarinic acetylcholine receptor M1/CHRM1 and calcitonin receptor/CALCR. As to expression, strongly expressed in the brain and the cochlea. Also in lung and muscle tissues. Localized in multiple structures of the cochlea, detected in the spiral ganglion, stria vascularis, spiral ligament, inner and outer hair cells.

Functionally, may play a role in regulation of a variety of G-protein coupled receptors. This Mus musculus (Mouse) protein is G-protein coupled receptor-associated sorting protein 2 (Gprasp2).